The following is a 42-amino-acid chain: Fungal defensin eurocin (42 aa).

4 residues coordinate beta-D-GlcNAc-(1-&gt;4)-Mur2Ac(oyl-L-Ala-gamma-D-Glu-L-Lys-D-Ala-D-Ala)-di-trans,octa-cis-undecaprenyl diphosphate: Phe2, Gly3, Cys4, and His14. Cystine bridges form between Cys4/Cys27, Cys11/Cys38, and Cys15/Cys40. Residues 31–35 (WYLGH) are interaction site with membranes lipids. Cys38 contacts beta-D-GlcNAc-(1-&gt;4)-Mur2Ac(oyl-L-Ala-gamma-D-Glu-L-Lys-D-Ala-D-Ala)-di-trans,octa-cis-undecaprenyl diphosphate.

This sequence belongs to the invertebrate defensin family.

The protein resides in the secreted. It localises to the target cell membrane. In terms of biological role, antimicrobial peptide that acts against Gram-positive bacteria but not against Gram-negative bacteria. It selectively inhibits peptidoglycan biosynthesis through complex formation with the cell wall precursor lipid II (1:1 molar ratio) thus inhibiting cell wall synthesis. It does not disrupt cell membranes. In vivo, is effective against an intraperitoneal infection with S.pneumoniae. In vitro, it shows very low hemolytic and cytolytic activities. In Aspergillus amstelodami, this protein is Fungal defensin eurocin.